The primary structure comprises 202 residues: uncharacterized protein (202 aa).

3 helical membrane passes run 34 to 54, 102 to 122, and 125 to 145; these read AAYV…QARI, MGVA…PLVI, and ILPL…FNKA. The segment at 165-202 is disordered; sequence NKPAAAVTGTSSNSNNASAKSDGPTITELNENETEKSS. Residues 168-185 show a composition bias toward low complexity; the sequence is AAAVTGTSSNSNNASAKS. 2 positions are modified to phosphoserine: S185 and S201.

The protein belongs to the PHO88 family.

The protein localises to the endoplasmic reticulum membrane. This is an uncharacterized protein from Schizosaccharomyces pombe (strain 972 / ATCC 24843) (Fission yeast).